Consider the following 765-residue polypeptide: Putative chloride channel-like protein CLC-g (765 aa).

Transmembrane regions (helical) follow at residues 67–87 (VFMK…IGFA), 116–136 (FVVF…ITAF), 167–187 (LIIK…IGKA), 190–210 (MVHT…KRYR), 232–252 (GAAA…LFAL), 262–282 (ALLW…RALI), 315–335 (VLPV…YNFL), 355–375 (ILLA…LPFL), 438–458 (FSVL…YGIV), 462–482 (GLFV…GMLL), 494–514 (AVLG…STCV), and 515–535 (ILLE…VLLI). Residues 568 to 640 (MRQLLVGDVV…LLKKRVFMPS (73 aa)) form the CBS 1 domain. S646 is subject to Phosphoserine. One can recognise a CBS 2 domain in the interval 687-748 (FSNASPYTVV…PEHILGLHPS (62 aa)). The helical transmembrane segment at 715–735 (HLLVIPKTSNRPPVVGILTRH) threads the bilayer.

It belongs to the chloride channel (TC 2.A.49) family. As to quaternary structure, homodimer. Interacts with PP2A5.

The protein resides in the membrane. Putative voltage-gated chloride channel. This chain is Putative chloride channel-like protein CLC-g (CLC-G), found in Arabidopsis thaliana (Mouse-ear cress).